A 387-amino-acid polypeptide reads, in one-letter code: Proline-rich protein 5 (387 aa).

2 interaction with RICTOR regions span residues 10 to 96 (MSSP…LTKG) and 189 to 219 (HESRGVTEDYLRLETLIQKVVSPYLGTYGLY). A disordered region spans residues 13-34 (PSLSDLGKREPGAAGTDERGTQ). A compositionally biased stretch (basic and acidic residues) spans 18–33 (LGKREPGAAGTDERGT). Ser-253 carries the phosphoserine modification. Residues 262-387 (NPVAEHEAEG…EAPGGRPSVV (126 aa)) are disordered. Residues 305–314 (SGTFRSSPTP) show a composition bias toward polar residues. At Ser-373 the chain carries Phosphoserine.

The protein belongs to the PROTOR family. Associated component of the mechanistic target of rapamycin complex 2 (mTORC2). Binds directly to MTOR and RICTOR within the TORC2 complex. In terms of tissue distribution, ubiquitously expressed. Expressed at high levels in kidney.

In terms of biological role, associated subunit of mTORC2, which regulates cell growth and survival in response to hormonal signals. mTORC2 is activated by growth factors, but, in contrast to mTORC1, seems to be nutrient-insensitive. mTORC2 seems to function upstream of Rho GTPases to regulate the actin cytoskeleton, probably by activating one or more Rho-type guanine nucleotide exchange factors. PRR5 plays an important role in regulation of PDGFRB expression and in modulation of platelet-derived growth factor signaling. May act as a tumor suppressor in breast cancer. In Mus musculus (Mouse), this protein is Proline-rich protein 5.